Consider the following 718-residue polypeptide: Ribosome-releasing factor 2, mitochondrial (718 aa).

Residues 1-29 (MLKCAWQNGPRQSNRWLWQLSNQIWKRSY) constitute a mitochondrion transit peptide. Positions 31 to 310 (SKIRNIGILA…AVNSYLPAPE (280 aa)) constitute a tr-type G domain. GTP-binding positions include 40-47 (AHIDAGKT), 104-108 (DTPGH), and 158-161 (NKMD).

The protein belongs to the TRAFAC class translation factor GTPase superfamily. Classic translation factor GTPase family. EF-G/EF-2 subfamily.

It is found in the mitochondrion. Mitochondrial GTPase that mediates the disassembly of ribosomes from messenger RNA at the termination of mitochondrial protein biosynthesis. Not involved in the GTP-dependent ribosomal translocation step during translation elongation. In Drosophila erecta (Fruit fly), this protein is Ribosome-releasing factor 2, mitochondrial.